The primary structure comprises 214 residues: Nucleoplasmin-2 (214 aa).

Residues 119–214 (ERYEASDLTW…ARAKKPGFKK (96 aa)) form a disordered region. Residues 127 to 155 (TWEEEEEEEGEEEEEEEEDDEDEDADISL) show a composition bias toward acidic residues. Residues 129 to 152 (EEEEEEEGEEEEEEEEDDEDEDAD) form an acidic tract A2 region. Positions 165–180 (KRLVPQKQASVAKKKK) match the Bipartite nuclear localization signal motif. Residues 181-197 (LEKEEEEIRASVRDKSP) are compositionally biased toward basic and acidic residues. The segment covering 198-214 (VKKAKATARAKKPGFKK) has biased composition (basic residues).

Belongs to the nucleoplasmin family. As to quaternary structure, homopentamer, when bound to H2A-H2B dimers only. Homodecamer of two stacked pentamers, when bound to H2A-H2B dimers and H3-H4 tetramers simultaneously.

It is found in the nucleus. Core histones chaperone involved in chromatin reprogramming, specially during fertilization and early embryonic development. Probably involved in sperm DNA decondensation during fertilization. The sequence is that of Nucleoplasmin-2 (NPM2) from Homo sapiens (Human).